The following is an 81-amino-acid chain: RBAK downstream neighbor protein (81 aa).

The N-terminal stretch at 1 to 22 (MWPPLLLLLLLLPAAPVPTAKA) is a signal peptide.

The protein localises to the secreted. This chain is RBAK downstream neighbor protein (RBAKDN), found in Homo sapiens (Human).